The primary structure comprises 162 residues: Globin CTT-VI (162 aa).

The N-terminal stretch at 1–15 is a signal peptide; the sequence is MKFLVLALCIAAASA. In terms of domain architecture, Globin spans 17–161; it reads VLTTEQADLV…TYAMLFSAMD (145 aa). Residues histidine 75 and histidine 110 each coordinate heme b.

Belongs to the globin family. As to quaternary structure, homodimer.

The sequence is that of Globin CTT-VI (CTT-6) from Chironomus thummi thummi (Midge).